The chain runs to 87 residues: Signal recognition particle 19 kDa protein (87 aa).

This sequence belongs to the SRP19 family. Part of the signal recognition particle protein translocation system, which is composed of SRP and FtsY. Archaeal SRP consists of a 7S RNA molecule of 300 nucleotides and two protein subunits: SRP54 and SRP19.

The protein resides in the cytoplasm. Involved in targeting and insertion of nascent membrane proteins into the cytoplasmic membrane. Binds directly to 7S RNA and mediates binding of the 54 kDa subunit of the SRP. The sequence is that of Signal recognition particle 19 kDa protein from Methanocaldococcus jannaschii (strain ATCC 43067 / DSM 2661 / JAL-1 / JCM 10045 / NBRC 100440) (Methanococcus jannaschii).